The sequence spans 240 residues: Eukaryotic translation initiation factor 4E-3 (240 aa).

The disordered stretch occupies residues 1 to 51 (MVVTDSPVSGIMADQNIDPNTTTSPSPKEKHVSAIKAISGDEKAPSKEKKN). Residues 17–26 (IDPNTTTSPS) show a composition bias toward polar residues. Residues 39–51 (SGDEKAPSKEKKN) are compositionally biased toward basic and acidic residues. EIF4G-binding stretches follow at residues 65 to 68 (HCFQ) and 75 to 111 (FDNP…NNIH). MRNA is bound by residues 83–88 (NQVIWG), lysine 115, and 133–134 (WE). Residues cysteine 138 and cysteine 176 are joined by a disulfide bond. The segment at 159 to 168 (NTLLALVGEQ) is EIF4G-binding. Residues 183–188 (RARGDR) and 228–232 (KTLDR) contribute to the mRNA site.

The protein belongs to the eukaryotic initiation factor 4E family. EIF4F is a multi-subunit complex, the composition of which varies with external and internal environmental conditions. It is composed of at least EIF4A, EIF4E and EIF4G. EIF4E is also known to interact with other partners. In higher plants two isoforms of EIF4F have been identified, named isoform EIF4F and isoform EIF(iso)4F. Isoform EIF4F has subunits p220 and p26, whereas isoform EIF(iso)4F has subunits p82 and p28. In terms of processing, according to the redox status, the Cys-138-Cys-176 disulfide bridge may have a role in regulating protein function by affecting its ability to bind capped mRNA.

It localises to the nucleus. It is found in the cytoplasm. Component of the protein complex eIF4F, which is involved in the recognition of the mRNA cap, ATP-dependent unwinding of 5'-terminal secondary structure and recruitment of mRNA to the ribosome. Recognizes and binds the 7-methylguanosine-containing mRNA cap during an early step in the initiation of protein synthesis and facilitates ribosome binding by inducing the unwinding of the mRNAs secondary structures. This chain is Eukaryotic translation initiation factor 4E-3, found in Arabidopsis thaliana (Mouse-ear cress).